We begin with the raw amino-acid sequence, 647 residues long: Cartilage acidic protein 1 (647 aa).

The first 30 residues, Met1–Ala30, serve as a signal peptide directing secretion. The FG-GAP 1; atypical repeat unit spans residues Asp48–Glu90. Residues Tyr107–Asp149 form an FG-GAP 2; atypical repeat. An FG-GAP 3; atypical repeat occupies Thr285–Asp335. The FG-GAP 4; atypical repeat unit spans residues Gly397 to Gly439. In terms of domain architecture, EGF-like spans Asp561–Cys607. Cystine bridges form between Cys565-Cys579, Cys572-Cys588, and Cys594-Cys607.

It localises to the secreted. It is found in the extracellular space. The protein localises to the extracellular matrix. This chain is Cartilage acidic protein 1 (crtac1), found in Xenopus tropicalis (Western clawed frog).